The following is a 552-amino-acid chain: Dihydroxy-acid dehydratase (552 aa).

D78 contacts Mg(2+). A [2Fe-2S] cluster-binding site is contributed by C119. Residues D120 and K121 each contribute to the Mg(2+) site. K121 bears the N6-carboxylysine mark. A [2Fe-2S] cluster-binding site is contributed by C191. Residue E442 participates in Mg(2+) binding. Residue S468 is the Proton acceptor of the active site.

This sequence belongs to the IlvD/Edd family. In terms of assembly, homodimer. It depends on [2Fe-2S] cluster as a cofactor. Requires Mg(2+) as cofactor.

It catalyses the reaction (2R)-2,3-dihydroxy-3-methylbutanoate = 3-methyl-2-oxobutanoate + H2O. The enzyme catalyses (2R,3R)-2,3-dihydroxy-3-methylpentanoate = (S)-3-methyl-2-oxopentanoate + H2O. Its pathway is amino-acid biosynthesis; L-isoleucine biosynthesis; L-isoleucine from 2-oxobutanoate: step 3/4. It participates in amino-acid biosynthesis; L-valine biosynthesis; L-valine from pyruvate: step 3/4. Functionally, functions in the biosynthesis of branched-chain amino acids. Catalyzes the dehydration of (2R,3R)-2,3-dihydroxy-3-methylpentanoate (2,3-dihydroxy-3-methylvalerate) into 2-oxo-3-methylpentanoate (2-oxo-3-methylvalerate) and of (2R)-2,3-dihydroxy-3-methylbutanoate (2,3-dihydroxyisovalerate) into 2-oxo-3-methylbutanoate (2-oxoisovalerate), the penultimate precursor to L-isoleucine and L-valine, respectively. In Caldicellulosiruptor bescii (strain ATCC BAA-1888 / DSM 6725 / KCTC 15123 / Z-1320) (Anaerocellum thermophilum), this protein is Dihydroxy-acid dehydratase.